Consider the following 219-residue polypeptide: MKLLNIALDGPAAAGKSTIAKLLAAKLSMIYVDTGAMYRAITYKYLQQNKPEDFDQLIETTELSLTYDKDKGQRVILDNQDVTDYLRENDVTNHVSYVASKEAVRTFSVNKQQELAAKKGIVMDGRDIGTVVLPDADLKVYMIASVEERAVRRQKDNEERGIVSNVEQLKQEIADRDQYDMNRDISPLKKADDAITVDTTGKSIEIVTQEILALVHKIS.

Residue 10 to 18 (GPAAAGKST) coordinates ATP.

Belongs to the cytidylate kinase family. Type 1 subfamily.

The protein localises to the cytoplasm. The enzyme catalyses CMP + ATP = CDP + ADP. It carries out the reaction dCMP + ATP = dCDP + ADP. The chain is Cytidylate kinase from Staphylococcus saprophyticus subsp. saprophyticus (strain ATCC 15305 / DSM 20229 / NCIMB 8711 / NCTC 7292 / S-41).